Consider the following 117-residue polypeptide: Ig heavy chain V region G4 (117 aa).

A signal peptide spans 1 to 19 (MTHWLCFTLALVAVRGVLS). Residues 20–49 (EIQLVESGGAIRKPGDSLRLSCKASGFTFS) are framework-1. Cysteines 41 and 115 form a disulfide. Positions 50–54 (DTWMA) are complementarity-determining-1. The framework-2 stretch occupies residues 55–68 (WARQPPGKGLQWVG). The segment at 69 to 85 (EINGNSETIRYAPEVKG) is complementarity-determining-2. Residues 86 to 117 (RLTISRDNTQNLLFLQISSLKPEDTATYYCAR) form a framework-3 region.

In Caiman crocodilus (Spectacled caiman), this protein is Ig heavy chain V region G4 (G4).